We begin with the raw amino-acid sequence, 540 residues long: Type II methyltransferase M.AccI (540 aa).

It belongs to the N(4)/N(6)-methyltransferase family. As to quaternary structure, monomer.

The catalysed reaction is a 2'-deoxyadenosine in DNA + S-adenosyl-L-methionine = an N(6)-methyl-2'-deoxyadenosine in DNA + S-adenosyl-L-homocysteine + H(+). A gamma subtype methylase, recognizes the double-stranded sequence 5'-GTMKAC-3', methylates A-5 on both strands, and protects the DNA from cleavage by the AccI endonuclease. This Acinetobacter calcoaceticus protein is Type II methyltransferase M.AccI (accIM).